The primary structure comprises 215 residues: Ras-related protein RAB1BV (215 aa).

Residues 22–29, 70–74, and 128–131 each bind GTP; these read GDSGVGKS, DTAGQ, and NKAD. The interval 183–215 is disordered; the sequence is DSDTRQEAQPSITIKPADQSGNQAAAKSACCGS. Residues Cys212 and Cys213 are each lipidated (S-geranylgeranyl cysteine).

It belongs to the small GTPase superfamily. Rab family.

It is found in the cell membrane. The chain is Ras-related protein RAB1BV (RAB1BV) from Beta vulgaris (Sugar beet).